The primary structure comprises 230 residues: Ribonuclease 3 (230 aa).

The 121-residue stretch at 5–125 (YSRFYNILGY…VIGAIYLDSD (121 aa)) folds into the RNase III domain. E40 is a binding site for Mg(2+). The active site involves D44. Residues D111 and E114 each coordinate Mg(2+). E114 is an active-site residue. A DRBM domain is found at 153–223 (DSKSKLQEIL…AEKMIEMLSQ (71 aa)).

This sequence belongs to the ribonuclease III family. As to quaternary structure, homodimer. The cofactor is Mg(2+).

The protein localises to the cytoplasm. The catalysed reaction is Endonucleolytic cleavage to 5'-phosphomonoester.. Its function is as follows. Digests double-stranded RNA. Involved in the processing of primary rRNA transcript to yield the immediate precursors to the large and small rRNAs (23S and 16S). Also processes some mRNAs, and tRNAs when they are encoded in the rRNA operon. In terms of biological role, CRISPR (clustered regularly interspaced short palindromic repeat) is an adaptive immune system that provides protection against mobile genetic elements (viruses, transposable elements and conjugative plasmids). CRISPR clusters contain spacers, sequences complementary to antecedent mobile elements, and target invading nucleic acids. CRISPR clusters are transcribed and processed into CRISPR RNA (crRNA). In this organism endogenous ribonuclease 3 and Cas9 are required for correct coprocessing of pre-crRNA and the trans-encoded small RNA (tracrRNA). Cas9, crRNA and tracrRNA are required for cleavage of invading DNA. Complements pre-crRNA and tracrRNA coprocessing defects in an rnc deletion in S.pyogenes strain 370. The sequence is that of Ribonuclease 3 from Francisella tularensis subsp. novicida (strain U112).